The primary structure comprises 340 residues: Porphobilinogen deaminase (340 aa).

The residue at position 258 (cysteine 258) is an S-(dipyrrolylmethanemethyl)cysteine.

Belongs to the HMBS family. Dipyrromethane serves as cofactor.

It catalyses the reaction 4 porphobilinogen + H2O = hydroxymethylbilane + 4 NH4(+). It functions in the pathway porphyrin-containing compound metabolism; protoporphyrin-IX biosynthesis; coproporphyrinogen-III from 5-aminolevulinate: step 2/4. Its function is as follows. Tetrapolymerization of the monopyrrole PBG into the hydroxymethylbilane pre-uroporphyrinogen in several discrete steps. The chain is Porphobilinogen deaminase (HEM3) from Candida albicans (strain SC5314 / ATCC MYA-2876) (Yeast).